The sequence spans 277 residues: Putative envelope-preserving system protein Rv2742c (277 aa).

Residues 31–54 (RDENRQRHAQVDVQRRRDQPERGQ) are compositionally biased toward basic and acidic residues. 3 disordered regions span residues 31 to 70 (RDEN…PDGR), 113 to 133 (QGSP…RLGR), and 180 to 210 (RQGS…HTAD). Over residues 116–133 (PRRRERRRGQTAHQRLGR) the composition is skewed to basic residues.

In terms of assembly, interacts with Rv2743c.

Involved in preservation of envelope integrity and tolerance to surface stress. Reverses the inhibitory effect of PspA on ClgR activity. Facilitates intracellular growth of M.tuberculosis. The polypeptide is Putative envelope-preserving system protein Rv2742c (Mycobacterium tuberculosis (strain ATCC 25618 / H37Rv)).